Consider the following 279-residue polypeptide: Large ribosomal subunit protein uL2 (279 aa).

Residues 223-279 are disordered; the sequence is MAMNPVDHPMGGGEGKSKSGGGRKHPKSPWGQLAKGLKTRNKKKASTKLIVRGRKAK. The span at 232-242 shows a compositional bias: gly residues; that stretch reads MGGGEGKSKSG. Positions 259-279 are enriched in basic residues; the sequence is LKTRNKKKASTKLIVRGRKAK.

Belongs to the universal ribosomal protein uL2 family. In terms of assembly, part of the 50S ribosomal subunit. Forms a bridge to the 30S subunit in the 70S ribosome.

Functionally, one of the primary rRNA binding proteins. Required for association of the 30S and 50S subunits to form the 70S ribosome, for tRNA binding and peptide bond formation. It has been suggested to have peptidyltransferase activity; this is somewhat controversial. Makes several contacts with the 16S rRNA in the 70S ribosome. The sequence is that of Large ribosomal subunit protein uL2 from Chlorobaculum tepidum (strain ATCC 49652 / DSM 12025 / NBRC 103806 / TLS) (Chlorobium tepidum).